A 119-amino-acid polypeptide reads, in one-letter code: Ethylene-responsive proteinase inhibitor 1 (119 aa).

The N-terminal stretch at 1 to 27 (MEANKSMVKLVAFLIILVSSCFQSLTA) is a signal peptide. A propeptide spanning residues 28–48 (QDLEIEVSDGLNVLQVHDVSQ) is cleaved from the precursor.

The protein belongs to the protease inhibitor I13 (potato type I serine protease inhibitor) family.

The protein resides in the secreted. This chain is Ethylene-responsive proteinase inhibitor 1, found in Solanum lycopersicum (Tomato).